Reading from the N-terminus, the 79-residue chain is Morintide mO2 (79 aa).

The signal sequence occupies residues 1-20; that stretch reads MAKLSFLSLFLLCLVATATA. Positions 21-63 constitute a Chitin-binding type-1 domain; it reads QNCGRQAGNRACANGLCCSQYGFCGSTSEYCSRANGCQSNCRG. 4 cysteine pairs are disulfide-bonded: Cys23–Cys38, Cys32–Cys44, Cys37–Cys51, and Cys57–Cys61. Residues 64 to 79 constitute a propeptide that is removed on maturation; it reads GGGAGGAGGGAGGGSP.

As to expression, leaves (at protein level).

Its function is as follows. Chitin-binding protein which functions in defense against chitin-containing fungal pathogens. In Moringa oleifera (Horseradish tree), this protein is Morintide mO2.